The chain runs to 160 residues: Protein-export protein SecB (160 aa).

The protein belongs to the SecB family. As to quaternary structure, homotetramer, a dimer of dimers. One homotetramer interacts with 1 SecA dimer.

It localises to the cytoplasm. In terms of biological role, one of the proteins required for the normal export of preproteins out of the cell cytoplasm. It is a molecular chaperone that binds to a subset of precursor proteins, maintaining them in a translocation-competent state. It also specifically binds to its receptor SecA. The protein is Protein-export protein SecB of Rhodospirillum rubrum (strain ATCC 11170 / ATH 1.1.1 / DSM 467 / LMG 4362 / NCIMB 8255 / S1).